Reading from the N-terminus, the 61-residue chain is Large ribosomal subunit protein bL28 (61 aa).

The tract at residues 1–26 (MAKDFVTGRKTTFGKKRSHALNQTNR) is disordered.

This sequence belongs to the bacterial ribosomal protein bL28 family.

This is Large ribosomal subunit protein bL28 from Ligilactobacillus salivarius (strain UCC118) (Lactobacillus salivarius).